The chain runs to 732 residues: Catalase-peroxidase (732 aa).

The interval 1–20 (MDKDSKRPVVGSTVRGGMSN) is disordered. A cross-link (tryptophyl-tyrosyl-methioninium (Trp-Tyr) (with M-246)) is located at residues 92–220 (WHSAGTYRMG…LAAVQMGLIY (129 aa)). His-93 functions as the Proton acceptor in the catalytic mechanism. The tryptophyl-tyrosyl-methioninium (Tyr-Met) (with W-92) cross-link spans 220 to 246 (YVNPEGPDGNPDPVAAGYDVIETFARM). Position 261 (His-261) interacts with heme b.

This sequence belongs to the peroxidase family. Peroxidase/catalase subfamily. Homodimer or homotetramer. Requires heme b as cofactor. Post-translationally, formation of the three residue Trp-Tyr-Met cross-link is important for the catalase, but not the peroxidase activity of the enzyme.

It catalyses the reaction H2O2 + AH2 = A + 2 H2O. It carries out the reaction 2 H2O2 = O2 + 2 H2O. Functionally, bifunctional enzyme with both catalase and broad-spectrum peroxidase activity. The protein is Catalase-peroxidase of Desulfosudis oleivorans (strain DSM 6200 / JCM 39069 / Hxd3) (Desulfococcus oleovorans).